The sequence spans 273 residues: Alkaline ceramidase 1 (273 aa).

At methionine 1–glutamate 36 the chain is on the lumenal side. Ca(2+)-binding residues include aspartate 22, tryptophan 23, glutamate 25, asparagine 27, and glutamate 36. The chain crosses the membrane as a helical span at residues phenylalanine 37–methionine 57. The Cytoplasmic portion of the chain corresponds to histidine 58 to serine 72. Helical transmembrane passes span valine 73–glycine 93 and glutamine 94–proline 114. Histidine 86 contributes to the Zn(2+) binding site. Over arginine 115–arginine 126 the chain is Cytoplasmic. The helical transmembrane segment at phenylalanine 127–lysine 147 threads the bilayer. The Lumenal segment spans residues proline 148–threonine 149. Residues valine 150–arginine 167 traverse the membrane as a helical segment. Residues threonine 168 to aspartate 177 are Cytoplasmic-facing. Residues leucine 178–serine 198 traverse the membrane as a helical segment. Residues aspartate 199–histidine 215 lie on the Lumenal side of the membrane. Zn(2+)-binding residues include histidine 215 and histidine 219. The helical transmembrane segment at serine 216–valine 236 threads the bilayer. Over aspartate 237–cysteine 273 the chain is Cytoplasmic.

This sequence belongs to the alkaline ceramidase family. It depends on Zn(2+) as a cofactor. As to expression, highly expressed in skin. Weakly or not expressed in other tissues. Expressed by granular layer of interfollicular epidermis, sebaceous glands and infundibulum.

It localises to the endoplasmic reticulum membrane. It catalyses the reaction an N-acylsphing-4-enine + H2O = sphing-4-enine + a fatty acid. The enzyme catalyses N-tetracosanoyl-sphing-4-enine + H2O = tetracosanoate + sphing-4-enine. The catalysed reaction is an N-acylsphinganine + H2O = sphinganine + a fatty acid. It carries out the reaction N-(9Z-octadecenoyl)-sphing-4-enine + H2O = sphing-4-enine + (9Z)-octadecenoate. It catalyses the reaction N-(15Z-tetracosenoyl)-sphing-4-enine + H2O = (15Z)-tetracosenoate + sphing-4-enine. It functions in the pathway lipid metabolism; sphingolipid metabolism. Its activity is regulated as follows. Inhibited by sphingosine. Inhibited by Mn(2+), Zn(2+), and Cu(2+) in a dose-dependent manner. Slightly activated by Ca(2+) in a dose-dependent manner. Its function is as follows. Endoplasmic reticulum ceramidase that catalyzes the hydrolysis of ceramides into sphingosine and free fatty acids at alkaline pH. Ceramides, sphingosine, and its phosphorylated form sphingosine-1-phosphate are bioactive lipids that mediate cellular signaling pathways regulating several biological processes including cell proliferation, apoptosis and differentiation. Exhibits a strong substrate specificity towards the natural stereoisomer of ceramides with D-erythro-sphingosine as a backbone and has a higher activity towards very long-chain unsaturated fatty acids like the C24:1-ceramide. May also hydrolyze dihydroceramides to produce dihydrosphingosine. ACER1 is a skin-specific ceramidase that regulates the levels of ceramides, sphingosine and sphingosine-1-phosphate in the epidermis, mediates the calcium-induced differentiation of epidermal keratinocytes and more generally plays an important role in skin homeostasis. This is Alkaline ceramidase 1 from Mus musculus (Mouse).